We begin with the raw amino-acid sequence, 144 residues long: Transcriptional regulator SlyA (144 aa).

The HTH marR-type domain maps to 2–135 (ESPLGSDLAR…LIKLIAKLEH (134 aa)). Positions 49–72 (QIQLAKAIGIEQPSLVRTLDQLED) form a DNA-binding region, H-T-H motif.

This sequence belongs to the SlyA family. As to quaternary structure, homodimer.

The protein localises to the cytoplasm. Functionally, transcription regulator that can specifically activate or repress expression of target genes. Required for virulence and survival in the macrophage environment. Probably activates the transcription of ssrB. Independently of ssrB activation, capable of stimulating the expression of virulence genes found on pathogenicity island 2 (SPI2). Probably activates expression of ispA, xseB genes, and of omp operon. This Salmonella typhimurium (strain LT2 / SGSC1412 / ATCC 700720) protein is Transcriptional regulator SlyA.